Reading from the N-terminus, the 151-residue chain is Large ribosomal subunit protein bL9 (151 aa).

This sequence belongs to the bacterial ribosomal protein bL9 family.

Binds to the 23S rRNA. The protein is Large ribosomal subunit protein bL9 of Chloroherpeton thalassium (strain ATCC 35110 / GB-78).